The following is a 184-amino-acid chain: GTP cyclohydrolase 1 (184 aa).

Residues cysteine 75, histidine 78, and cysteine 146 each contribute to the Zn(2+) site.

The protein belongs to the GTP cyclohydrolase I family. As to quaternary structure, toroid-shaped homodecamer, composed of two pentamers of five dimers.

It catalyses the reaction GTP + H2O = 7,8-dihydroneopterin 3'-triphosphate + formate + H(+). It functions in the pathway cofactor biosynthesis; 7,8-dihydroneopterin triphosphate biosynthesis; 7,8-dihydroneopterin triphosphate from GTP: step 1/1. This is GTP cyclohydrolase 1 from Pseudoalteromonas atlantica (strain T6c / ATCC BAA-1087).